A 312-amino-acid polypeptide reads, in one-letter code: Very-long-chain 3-oxoacyl-CoA reductase (312 aa).

A helical transmembrane segment spans residues 4 to 24 (ALPAAGFLYWVGAGTVAYLAL). An NADP(+)-binding site is contributed by 50–79 (GEWAVVTGGTDGIGKSYAEELAKRGMKVVL). The next 2 membrane-spanning stretches (helical) occupy residues 182-202 (GAIL…LTIY) and 271-291 (GYLI…WIYL). S189 is a binding site for substrate. The active-site Proton acceptor is the Y202. The short motif at 308-312 (KIKKN) is the Di-lysine motif element.

Belongs to the short-chain dehydrogenases/reductases (SDR) family. 17-beta-HSD 3 subfamily.

Its subcellular location is the endoplasmic reticulum membrane. The catalysed reaction is a very-long-chain (3R)-3-hydroxyacyl-CoA + NADP(+) = a very-long-chain 3-oxoacyl-CoA + NADPH + H(+). The enzyme catalyses 17beta-estradiol + NAD(+) = estrone + NADH + H(+). It catalyses the reaction 17beta-estradiol + NADP(+) = estrone + NADPH + H(+). It carries out the reaction 3-oxooctadecanoyl-CoA + NADPH + H(+) = (3R)-hydroxyoctadecanoyl-CoA + NADP(+). The catalysed reaction is (7Z,10Z,13Z,16Z)-3-oxodocosatetraenoyl-CoA + NADPH + H(+) = (3R)-hydroxy-(7Z,10Z,13Z,16Z)-docosatetraenoyl-CoA + NADP(+). The enzyme catalyses 3-oxo-(7Z,10Z,13Z,16Z,19Z)-docosapentaenoyl-CoA + NADPH + H(+) = (3R)-hydroxy-(7Z,10Z,13Z,16Z,19Z)-docosapentaenoyl-CoA + NADP(+). It catalyses the reaction (8Z,11Z,14Z)-3-oxoeicosatrienoyl-CoA + NADPH + H(+) = (3R)-hydroxy-(8Z,11Z,14Z)-eicosatrienoyl-CoA + NADP(+). Its pathway is lipid metabolism; fatty acid biosynthesis. It participates in steroid biosynthesis; estrogen biosynthesis. In terms of biological role, catalyzes the second of the four reactions of the long-chain fatty acids elongation cycle. This endoplasmic reticulum-bound enzymatic process, allows the addition of two carbons to the chain of long- and very long-chain fatty acids/VLCFAs per cycle. This enzyme has a 3-ketoacyl-CoA reductase activity, reducing 3-ketoacyl-CoA to 3-hydroxyacyl-CoA, within each cycle of fatty acid elongation. Thereby, it may participate in the production of VLCFAs of different chain lengths that are involved in multiple biological processes as precursors of membrane lipids and lipid mediators. May also catalyze the transformation of estrone (E1) into estradiol (E2) and play a role in estrogen formation. The protein is Very-long-chain 3-oxoacyl-CoA reductase (HSD17B12) of Macaca fascicularis (Crab-eating macaque).